Consider the following 387-residue polypeptide: Anhydro-N-acetylmuramic acid kinase (387 aa).

Residue 9–16 (GTSADGVD) coordinates ATP.

It belongs to the anhydro-N-acetylmuramic acid kinase family.

The enzyme catalyses 1,6-anhydro-N-acetyl-beta-muramate + ATP + H2O = N-acetyl-D-muramate 6-phosphate + ADP + H(+). The protein operates within amino-sugar metabolism; 1,6-anhydro-N-acetylmuramate degradation. It participates in cell wall biogenesis; peptidoglycan recycling. Functionally, catalyzes the specific phosphorylation of 1,6-anhydro-N-acetylmuramic acid (anhMurNAc) with the simultaneous cleavage of the 1,6-anhydro ring, generating MurNAc-6-P. Is required for the utilization of anhMurNAc either imported from the medium or derived from its own cell wall murein, and thus plays a role in cell wall recycling. The polypeptide is Anhydro-N-acetylmuramic acid kinase (Synechococcus sp. (strain WH7803)).